Reading from the N-terminus, the 839-residue chain is Capsid-associated protein Vp91 (839 aa).

Positions 1-23 are cleaved as a signal peptide; the sequence is MMSGVMLLVFAIFLIIAFTLIYL. A C2HC BV-type zinc finger spans residues 148-197; the sequence is CVPVPPCDNKPAGRYPMDERLLDTLVLNQHLDKDYSSNEHLYHPTFYLRC. Intrachain disulfides connect Cys208/Cys221 and Cys261/Cys274. N-linked (GlcNAc...) asparagine; by host glycosylation occurs at Asn211. The Chitin-binding type-2 domain occupies 224–282; that stretch reads NELCENRPDGYILSYFPSNLLVNQFMQCVSGRHVVRECPANKIFDRNLMSCVEAHPCTF. 5 N-linked (GlcNAc...) asparagine; by host glycosylation sites follow: Asn306, Asn337, Asn613, Asn619, and Asn639. 2 disordered regions span residues 624–644 and 659–690; these read SPVF…SISP and EPDG…LPSP. The segment covering 667–678 has biased composition (pro residues); that stretch reads APPPTAPPPPSE.

The protein localises to the virion. In terms of biological role, probable capsid-associated protein. In Bombyx mori nuclear polyhedrosis virus (BmNPV), this protein is Capsid-associated protein Vp91 (p95).